A 499-amino-acid polypeptide reads, in one-letter code: Maturase K (499 aa).

This sequence belongs to the intron maturase 2 family. MatK subfamily.

It localises to the plastid. The protein resides in the chloroplast. Usually encoded in the trnK tRNA gene intron. Probably assists in splicing its own and other chloroplast group II introns. This Macrozamia communis (Burrawang palm) protein is Maturase K.